A 218-amino-acid polypeptide reads, in one-letter code: MTDGDYDYLIKLLALGDSGVGKTTFLYRYTDNKFNPKFITTVGIDFREKRVAYNTQGPNGPTGKAFKVHLQLWDTAGQERFRSLTTAFFRDAMGFLLMFDLTSQQSFLNVRNWMSQLQANAYCENPDIVLIGNKADLPDQREVNERQARDLAEKYSIPYFETSAATGQNVEKAVETLLDLIMKRMEQCVEKTHIPDTVNGSSSGKLDGEKSAEKKCAC.

Position 2 is an N-acetylthreonine (Thr2). Position 16–24 (16–24 (GDSGVGKTT)) interacts with GTP. Residues 38 to 46 (FITTVGIDF) carry the Effector region motif. Residues 74 to 78 (DTAGQ), 133 to 136 (NKAD), and 163 to 165 (SAA) each bind GTP. The cysteines at positions 123 and 188 are disulfide-linked. The tract at residues 193-218 (HIPDTVNGSSSGKLDGEKSAEKKCAC) is disordered. The segment covering 206–218 (LDGEKSAEKKCAC) has biased composition (basic and acidic residues). Residues Cys216 and Cys218 are each lipidated (S-geranylgeranyl cysteine). Cys218 carries the cysteine methyl ester modification.

It belongs to the small GTPase superfamily. Rab family. In terms of assembly, interacts with SYTL2, SYTL4, MYRIP and MLPH. Interacts with RPH3A and RPH3A. Interacts (GDP-bound form preferentially) with DENND10. As to expression, expressed at an extraordinary high level (0.1% of total protein) in urothelium.

The protein resides in the membrane. The protein localises to the late endosome. It carries out the reaction GTP + H2O = GDP + phosphate + H(+). Regulated by guanine nucleotide exchange factors (GEFs) which promote the exchange of bound GDP for free GTP, GTPase activating proteins (GAPs) which increase the GTP hydrolysis activity, and GDP dissociation inhibitors which inhibit the dissociation of the nucleotide from the GTPase. Activated by GEFs such as DENND10. Small GTPase which cycles between active GTP-bound and inactive GDP-bound states. In its active state, binds to a variety of effector proteins to regulate homeostasis of late endocytic pathway, including endosomal positioning, maturation and secretion. Plays a role in NTRK2/TRKB axonal anterograde transport by facilitating the association of NTRK2/TRKB with KLC1. May be involved in targeting uroplakins to urothelial apical membranes. This is Ras-related protein Rab-27B (RAB27B) from Bos taurus (Bovine).